A 767-amino-acid polypeptide reads, in one-letter code: Transducin-like enhancer protein 2 (767 aa).

The interval 1-152 (MYPQGRHPTP…SLLGQQNQLQ (152 aa)) is q domain. The segment at 153 to 215 (PLSHAPPVPL…SRVDRAASRS (63 aa)) is GP domain. Over residues 198 to 212 (RVGVDAEGSRVDRAA) the composition is skewed to basic and acidic residues. Disordered regions lie at residues 198–257 (RVGV…EEDK), 264–283 (VDED…CGKA), and 296–346 (SPAS…SSAS). The interval 216-279 (SSPSPPESLV…SEPPSPVTTP (64 aa)) is ccN domain. The Nuclear localization signal signature appears at 238-242 (KQQRA). Ser-253 bears the Phosphoserine; by CK2 mark. A Phosphoserine; by CDK1 modification is found at Ser-274. A Phosphothreonine; by CDK1 modification is found at Thr-278. An SP domain region spans residues 280-447 (CGKAPLCIPA…VAKPAYSFHV (168 aa)). Over residues 296–309 (SPASLASSLGSPLP) the composition is skewed to low complexity. The residue at position 306 (Ser-306) is a Phosphoserine. Over residues 323–346 (TPASRSCGTSPPQDSSTPGPSSAS) the composition is skewed to polar residues. WD repeat units follow at residues 479-517 (AHGE…SKTP), 525-564 (NRDN…PRIK), 569-608 (SSAP…MVRQ), 611-650 (GHTD…QLQQ), 693-732 (LHES…SIFQ), and 734-766 (KESS…YEVV).

The protein belongs to the WD repeat Groucho/TLE family. In terms of assembly, homooligomer and heterooligomer with other family members. Binds LEF1, TCF7, TCF7L1, TCF7L2, UTY, HES1 and HES5. Post-translationally, ubiquitinated by XIAP/BIRC4. As to expression, expressed in bone marrow-derived macrophages.

The protein resides in the nucleus. In terms of biological role, transcriptional corepressor that binds to a number of transcription factors. Inhibits the transcriptional activation mediated by CTNNB1 and TCF family members in Wnt signaling. The effects of full-length TLE family members may be modulated by association with dominant-negative AES. In Mus musculus (Mouse), this protein is Transducin-like enhancer protein 2 (Tle2).